We begin with the raw amino-acid sequence, 232 residues long: Protein FAM228B (232 aa).

This sequence belongs to the FAM228 family.

The polypeptide is Protein FAM228B (Fam228b) (Mus musculus (Mouse)).